Reading from the N-terminus, the 298-residue chain is Tyrosine recombinase XerC (298 aa).

In terms of domain architecture, Core-binding (CB) spans 1–85; it reads MQQQLDAYCA…AVRGLYHYLN (85 aa). The Tyr recombinase domain maps to 106–285; sequence RLPKTLDTDR…DFQHLAAVYD (180 aa). Residues Arg146, Lys170, His237, Arg240, and His263 contribute to the active site. The active-site O-(3'-phospho-DNA)-tyrosine intermediate is the Tyr272.

It belongs to the 'phage' integrase family. XerC subfamily. In terms of assembly, forms a cyclic heterotetrameric complex composed of two molecules of XerC and two molecules of XerD.

It is found in the cytoplasm. In terms of biological role, site-specific tyrosine recombinase, which acts by catalyzing the cutting and rejoining of the recombining DNA molecules. The XerC-XerD complex is essential to convert dimers of the bacterial chromosome into monomers to permit their segregation at cell division. It also contributes to the segregational stability of plasmids. The polypeptide is Tyrosine recombinase XerC (Pseudomonas fluorescens (strain ATCC BAA-477 / NRRL B-23932 / Pf-5)).